Reading from the N-terminus, the 189-residue chain is UPF0251 protein MTH_1178 (189 aa).

It belongs to the UPF0251 family.

The sequence is that of UPF0251 protein MTH_1178 from Methanothermobacter thermautotrophicus (strain ATCC 29096 / DSM 1053 / JCM 10044 / NBRC 100330 / Delta H) (Methanobacterium thermoautotrophicum).